The sequence spans 428 residues: Bifunctional IPC transferase and DIPP synthase (428 aa).

The segment at 2–227 (VETAVILAGG…KAKKYLVKTA (226 aa)) is mobA-like NTP transferase. CTP is bound by residues 8–10 (LAG), lysine 25, glutamate 80, and glutamate 116. Glutamate 116 provides a ligand contact to Mg(2+). The interval 228 to 425 (IKGVGDGFIS…LTIYLVWKKK (198 aa)) is CDP-alcohol phosphatidyltransferases. The next 3 membrane-spanning stretches (helical) occupy residues 266–286 (FLLG…GGIL), 336–356 (PSWD…MVSY), and 389–409 (MIMI…LAII).

This sequence in the N-terminal section; belongs to the MobA family. It in the C-terminal section; belongs to the CDP-alcohol phosphatidyltransferase class-I family. Mg(2+) serves as cofactor.

The protein localises to the membrane. The enzyme catalyses 1D-myo-inositol 3-phosphate + CTP + H(+) = CDP-1L-myo-inositol + diphosphate. It catalyses the reaction CDP-1L-myo-inositol + 1D-myo-inositol 3-phosphate = bis(1L-myo-inositol) 3,1'-phosphate 1-phosphate + CMP + H(+). In terms of biological role, involved in biosynthesis of di-myo-inositol phosphate (DIP), a widespread organic solute in microorganisms adapted to hot environments. Catalyzes the condensation of CTP and L-myo-inositol-1-phosphate into CDP-L-myo-inositol, as well as the biosynthesis of di-myo-inositol-1,3'-phosphate-1'-phosphate (DIPP) from CDP-L-myo-inositol and L-myo-inositol-1-phosphate. In Aquifex aeolicus (strain VF5), this protein is Bifunctional IPC transferase and DIPP synthase (spsI).